Here is a 313-residue protein sequence, read N- to C-terminus: Homeobox protein knotted-1-like 2 (313 aa).

The tract at residues 13-40 (DPSSAAASSPNPSFSPGGGGGGGVGGGE) is disordered. Over residues 14-27 (PSSAAASSPNPSFS) the composition is skewed to low complexity. The segment covering 28 to 38 (PGGGGGGGVGG) has biased composition (gly residues). Residues 205 to 225 (ELKNELKQGYKEKLVDIREEI) enclose the ELK domain. A DNA-binding region (homeobox; TALE-type) is located at residues 226-289 (LRKRRAGKLP…NQRKRNWHSN (64 aa)). The segment at 282–313 (RKRNWHSNPASSGEKTKKKRNVTGDGGAEQSW) is disordered.

This sequence belongs to the TALE/KNOX homeobox family. In terms of tissue distribution, isoform 1 is expressed in roots, leaf blades, leaf sheaths and flowers. Isoform 2 is expressed in leaf blades, leaf sheaths and flowers.

It localises to the nucleus. The chain is Homeobox protein knotted-1-like 2 (HOS58) from Oryza sativa subsp. japonica (Rice).